Consider the following 59-residue polypeptide: uncharacterized protein (59 aa).

The chain crosses the membrane as a helical span at residues 6-26 (WWLVVFAVFVFLFDTLLMQWI).

The protein resides in the membrane. This is an uncharacterized protein from Escherichia coli O157:H7.